A 331-amino-acid chain; its full sequence is Glycerophosphodiester phosphodiesterase 1 (331 aa).

The Cytoplasmic portion of the chain corresponds to 1 to 3; sequence MWL. The helical transmembrane segment at 4–24 threads the bilayer; that stretch reads WEDQGGLLGPFSFLLLVLLLV. Residues 25 to 247 lie on the Lumenal side of the membrane; the sequence is TRSPVNACLL…KPRYDTFWKH (223 aa). Residues 65–331 enclose the GP-PDE domain; that stretch reads ISAIAHRGGS…SMVEDCEPHF (267 aa). E97 and D99 together coordinate Mg(2+). A glycan (N-linked (GlcNAc...) asparagine) is linked at N168. D174 provides a ligand contact to Mg(2+). The N-linked (GlcNAc...) asparagine glycan is linked to N198. Residues 248–268 traverse the membrane as a helical segment; it reads FIFVMMDILLDWSMHNILWYL. At 269 to 331 the chain is on the cytoplasmic side; it reads CGISAFLMQK…SMVEDCEPHF (63 aa).

This sequence belongs to the glycerophosphoryl diester phosphodiesterase family. Interacts with PRAF2. Interacts with RGS16. The cofactor is Mg(2+). N-glycosylated. Widely expressed.

It is found in the cell membrane. The protein resides in the cytoplasmic vesicle membrane. It catalyses the reaction sn-glycero-3-phospho-1D-myo-inositol + H2O = myo-inositol + sn-glycerol 3-phosphate + H(+). The enzyme catalyses 1-O-(1Z-octadecenyl)-sn-glycero-3-phospho-(N-5Z,8Z,11Z,14Z-eicosatetraenoyl)-ethanolamine + H2O = 1-O-(1Z-octadecenyl)-sn-glycero-3-phosphate + N-(5Z,8Z,11Z,14Z-eicosatetraenoyl)-ethanolamine + H(+). The catalysed reaction is 1-O-(1Z-octadecenyl)-sn-glycero-3-phospho-(N-9Z-octadecenoyl)-ethanolamine + H2O = 1-O-(1Z-octadecenyl)-sn-glycero-3-phosphate + N-(9Z-octadecenoyl) ethanolamine + H(+). It carries out the reaction 1-O-(1Z-octadecenyl)-sn-glycero-3-phospho-N-hexadecanoyl-ethanolamine + H2O = 1-O-(1Z-octadecenyl)-sn-glycero-3-phosphate + N-hexadecanoylethanolamine + H(+). It catalyses the reaction N-(4Z,7Z,10Z,13Z,16Z,19Z)-docosahexaenoyl-sn-glycero-3-phosphoethanolamine + H2O = N-(4Z,7Z,10Z,13Z,16Z,19Z)-docosahexaenoyl ethanolamine + sn-glycerol 3-phosphate + H(+). The enzyme catalyses N-eicosanoyl-sn-glycero-3-phosphoethanolamine + H2O = N-eicosanoyl ethanolamine + sn-glycerol 3-phosphate + H(+). The catalysed reaction is N-hexadecanoyl-sn-glycero-3-phosphoethanolamine + H2O = N-hexadecanoylethanolamine + sn-glycerol 3-phosphate + H(+). It carries out the reaction N-(9Z-octadecenoyl)-sn-glycero-3-phosphoethanolamine + H2O = N-(9Z-octadecenoyl) ethanolamine + sn-glycerol 3-phosphate + H(+). It catalyses the reaction N-(5Z,8Z,11Z,14Z-eicosatetraenoyl)-sn-glycero-3-phosphoethanolamine + H2O = N-(5Z,8Z,11Z,14Z-eicosatetraenoyl)-ethanolamine + sn-glycerol 3-phosphate + H(+). Its activity is regulated as follows. Inhibited by EDTA, calcium chloride, and zinc chloride. Enhanced by magnesium chloride. Glycerophosphodiester phosphodiesterase activity can be modulated by G-protein signaling pathways. Functionally, hydrolyzes the phosphodiester bond of glycerophosphodiesters such as glycerophosphoinositol (GroPIns) and glycerophosphoethanolamine (GroPEth), to yield a glycerol phosphate and an alcohol. Hydrolyzes glycerophospho-N-acylethanolamines to N-acylethanolamines in the brain and participates in bioactive N-acylethanolamine biosynthesis such as anandamide (an endocannabinoid), N-palmitoylethanolamine (an anti-inflammatory), and N-oleoylethanolamine (an anorexic). In addition, has a lysophospholipase D activity by hydrolyzing N-acyl-lysoplasmenylethanolamine (N-acyl-lysoPlsEt) to N-acylethanolamine. However lysophospholipase D activity is lower than glycerophosphodiester phosphodiesterase activity. Has little or no activity towards glycerophosphocholine. This is Glycerophosphodiester phosphodiesterase 1 from Homo sapiens (Human).